Here is a 156-residue protein sequence, read N- to C-terminus: 6,7-dimethyl-8-ribityllumazine synthase (156 aa).

5-amino-6-(D-ribitylamino)uracil is bound by residues Phe22, Ala57–Glu59, and Ser81–Ile83. (2S)-2-hydroxy-3-oxobutyl phosphate is bound at residue Gly86–Thr87. Catalysis depends on His89, which acts as the Proton donor. Position 114 (Phe114) interacts with 5-amino-6-(D-ribitylamino)uracil. Position 128 (Arg128) interacts with (2S)-2-hydroxy-3-oxobutyl phosphate.

It belongs to the DMRL synthase family. Forms an icosahedral capsid composed of 60 subunits, arranged as a dodecamer of pentamers.

The enzyme catalyses (2S)-2-hydroxy-3-oxobutyl phosphate + 5-amino-6-(D-ribitylamino)uracil = 6,7-dimethyl-8-(1-D-ribityl)lumazine + phosphate + 2 H2O + H(+). The protein operates within cofactor biosynthesis; riboflavin biosynthesis; riboflavin from 2-hydroxy-3-oxobutyl phosphate and 5-amino-6-(D-ribitylamino)uracil: step 1/2. Its function is as follows. Catalyzes the formation of 6,7-dimethyl-8-ribityllumazine by condensation of 5-amino-6-(D-ribitylamino)uracil with 3,4-dihydroxy-2-butanone 4-phosphate. This is the penultimate step in the biosynthesis of riboflavin. This Aliivibrio salmonicida (strain LFI1238) (Vibrio salmonicida (strain LFI1238)) protein is 6,7-dimethyl-8-ribityllumazine synthase.